A 1390-amino-acid chain; its full sequence is DNA-directed RNA polymerase subunit beta (1390 aa).

This sequence belongs to the RNA polymerase beta chain family. In terms of assembly, the RNAP catalytic core consists of 2 alpha, 1 beta, 1 beta' and 1 omega subunit. When a sigma factor is associated with the core the holoenzyme is formed, which can initiate transcription.

The catalysed reaction is RNA(n) + a ribonucleoside 5'-triphosphate = RNA(n+1) + diphosphate. Its function is as follows. DNA-dependent RNA polymerase catalyzes the transcription of DNA into RNA using the four ribonucleoside triphosphates as substrates. The chain is DNA-directed RNA polymerase subunit beta from Mycoplasma genitalium (strain ATCC 33530 / DSM 19775 / NCTC 10195 / G37) (Mycoplasmoides genitalium).